The chain runs to 252 residues: Imidazole glycerol phosphate synthase subunit HisF (252 aa).

Residues D11 and D130 contribute to the active site.

Belongs to the HisA/HisF family. As to quaternary structure, heterodimer of HisH and HisF.

It localises to the cytoplasm. It carries out the reaction 5-[(5-phospho-1-deoxy-D-ribulos-1-ylimino)methylamino]-1-(5-phospho-beta-D-ribosyl)imidazole-4-carboxamide + L-glutamine = D-erythro-1-(imidazol-4-yl)glycerol 3-phosphate + 5-amino-1-(5-phospho-beta-D-ribosyl)imidazole-4-carboxamide + L-glutamate + H(+). Its pathway is amino-acid biosynthesis; L-histidine biosynthesis; L-histidine from 5-phospho-alpha-D-ribose 1-diphosphate: step 5/9. IGPS catalyzes the conversion of PRFAR and glutamine to IGP, AICAR and glutamate. The HisF subunit catalyzes the cyclization activity that produces IGP and AICAR from PRFAR using the ammonia provided by the HisH subunit. The sequence is that of Imidazole glycerol phosphate synthase subunit HisF from Aromatoleum aromaticum (strain DSM 19018 / LMG 30748 / EbN1) (Azoarcus sp. (strain EbN1)).